The chain runs to 459 residues: Friend virus susceptibility protein 1 (459 aa).

The tract at residues 192–269 (EAELPTVLAS…LNSLAHSNRQ (78 aa)) is disordered. Over residues 213–223 (SKERTQQDKAD) the composition is skewed to basic and acidic residues. Over residues 226 to 238 (QIQSSTSLVTSEP) the composition is skewed to polar residues.

Its function is as follows. Retroviral restriction factor that prevents infection by gammaretroviruses. Acts by interacting with the capsid protein ca after entry of the virus into the cell. This interaction presumably disrupt the capsid thereby inactivating the viral genome, making it unable to enter host nucleus and integrate into host genome. This Mus musculus (Mouse) protein is Friend virus susceptibility protein 1 (Fv1).